The sequence spans 212 residues: MNRTFIITGTDTGIGKTVFSAALAGALNAYYWKPVQSGLEEATDSETVVQLAGLSRRNVIPESWRLNTPASPHLSAQIDRVEIDTDALAVPSVDAPLVIEGAGGLHVPLTRRTTFIDVFARWRKPVILCARTGLGTINHTLLSLEALNRRNIPVLGIAFVGDHQPDTEKIIPELSGVRRLGRLPRLAKLDPDALRQAFREHFDINIFGGASE.

Gly13–Val18 serves as a coordination point for ATP. Mg(2+) is bound at residue Thr17. Residue Lys33 is part of the active site. Residue Ser37 coordinates substrate. Residue Glu100 participates in Mg(2+) binding. ATP is bound by residues Glu100 to Gly103 and Pro184 to Leu186.

Belongs to the dethiobiotin synthetase family. In terms of assembly, homodimer. It depends on Mg(2+) as a cofactor.

The protein localises to the cytoplasm. It carries out the reaction (7R,8S)-7,8-diammoniononanoate + CO2 + ATP = (4R,5S)-dethiobiotin + ADP + phosphate + 3 H(+). The protein operates within cofactor biosynthesis; biotin biosynthesis; biotin from 7,8-diaminononanoate: step 1/2. Its function is as follows. Catalyzes a mechanistically unusual reaction, the ATP-dependent insertion of CO2 between the N7 and N8 nitrogen atoms of 7,8-diaminopelargonic acid (DAPA, also called 7,8-diammoniononanoate) to form a ureido ring. The polypeptide is ATP-dependent dethiobiotin synthetase BioD (Brucella anthropi (strain ATCC 49188 / DSM 6882 / CCUG 24695 / JCM 21032 / LMG 3331 / NBRC 15819 / NCTC 12168 / Alc 37) (Ochrobactrum anthropi)).